The chain runs to 884 residues: Alanine--tRNA ligase (884 aa).

Residues histidine 570, histidine 574, cysteine 676, and histidine 680 each coordinate Zn(2+).

This sequence belongs to the class-II aminoacyl-tRNA synthetase family. Zn(2+) serves as cofactor.

Its subcellular location is the cytoplasm. The enzyme catalyses tRNA(Ala) + L-alanine + ATP = L-alanyl-tRNA(Ala) + AMP + diphosphate. Functionally, catalyzes the attachment of alanine to tRNA(Ala) in a two-step reaction: alanine is first activated by ATP to form Ala-AMP and then transferred to the acceptor end of tRNA(Ala). Also edits incorrectly charged Ser-tRNA(Ala) and Gly-tRNA(Ala) via its editing domain. The protein is Alanine--tRNA ligase of Lawsonia intracellularis (strain PHE/MN1-00).